Consider the following 114-residue polypeptide: Amphinase-4 (114 aa).

The active-site Proton acceptor is H15. Disulfide bonds link C26–C79, C41–C85, C59–C100, and C97–C114. Residue N27 is glycosylated (N-linked (GlcNAc...) asparagine). A substrate-binding site is contributed by K42–T46. Residues N67 and N91 are each glycosylated (N-linked (GlcNAc...) asparagine). Residue H107 is the Proton donor of the active site.

This sequence belongs to the pancreatic ribonuclease family. In terms of assembly, monomer. In terms of processing, there are at least five different forms arising from glycan heterogeneity.

The protein resides in the secreted. In terms of biological role, endonuclease, hydrolyzes highly polymerized RNA, poly(U) and poly(C), and the dinucleotides CpA and UpA. Hydrolyzes rCA, rUA and rUG. Has cytotoxic activity against cultured human submaxillary gland carcinoma cells. The polypeptide is Amphinase-4 (Lithobates pipiens (Northern leopard frog)).